A 28-amino-acid polypeptide reads, in one-letter code: Expansin-B1 (28 aa).

Residues 11–28 (MLLSLQGPXSLRMVSESG) form the Expansin-like CBD domain.

It belongs to the expansin family. Expansin B subfamily.

The protein localises to the secreted. It is found in the cell wall. The protein resides in the membrane. Functionally, may cause loosening and extension of plant cell walls by disrupting non-covalent bonding between cellulose microfibrils and matrix glucans. The polypeptide is Expansin-B1 (Pseudotsuga menziesii (Douglas-fir)).